Reading from the N-terminus, the 234-residue chain is Octanoyltransferase (234 aa).

Residues glycine 50–arginine 234 enclose the BPL/LPL catalytic domain. Substrate contacts are provided by residues arginine 88–histidine 95, alanine 163–glycine 165, and glycine 176–alanine 178. The Acyl-thioester intermediate role is filled by cysteine 194.

The protein belongs to the LipB family.

The protein resides in the cytoplasm. It catalyses the reaction octanoyl-[ACP] + L-lysyl-[protein] = N(6)-octanoyl-L-lysyl-[protein] + holo-[ACP] + H(+). It participates in protein modification; protein lipoylation via endogenous pathway; protein N(6)-(lipoyl)lysine from octanoyl-[acyl-carrier-protein]: step 1/2. Functionally, catalyzes the transfer of endogenously produced octanoic acid from octanoyl-acyl-carrier-protein onto the lipoyl domains of lipoate-dependent enzymes. Lipoyl-ACP can also act as a substrate although octanoyl-ACP is likely to be the physiological substrate. The chain is Octanoyltransferase from Rhodopseudomonas palustris (strain BisA53).